A 303-amino-acid chain; its full sequence is UDP-3-O-acyl-N-acetylglucosamine deacetylase (303 aa).

3 residues coordinate Zn(2+): His78, His237, and Asp241. His264 functions as the Proton donor in the catalytic mechanism.

This sequence belongs to the LpxC family. Requires Zn(2+) as cofactor.

The catalysed reaction is a UDP-3-O-[(3R)-3-hydroxyacyl]-N-acetyl-alpha-D-glucosamine + H2O = a UDP-3-O-[(3R)-3-hydroxyacyl]-alpha-D-glucosamine + acetate. The protein operates within glycolipid biosynthesis; lipid IV(A) biosynthesis; lipid IV(A) from (3R)-3-hydroxytetradecanoyl-[acyl-carrier-protein] and UDP-N-acetyl-alpha-D-glucosamine: step 2/6. Catalyzes the hydrolysis of UDP-3-O-myristoyl-N-acetylglucosamine to form UDP-3-O-myristoylglucosamine and acetate, the committed step in lipid A biosynthesis. The sequence is that of UDP-3-O-acyl-N-acetylglucosamine deacetylase from Pseudomonas fluorescens (strain SBW25).